We begin with the raw amino-acid sequence, 441 residues long: Tol-Pal system protein TolB (441 aa).

The N-terminal stretch at 1-39 (MPTMTPAFSRASLSEALRSYGLALLLFLATLLAWQPAHA) is a signal peptide.

Belongs to the TolB family. The Tol-Pal system is composed of five core proteins: the inner membrane proteins TolA, TolQ and TolR, the periplasmic protein TolB and the outer membrane protein Pal. They form a network linking the inner and outer membranes and the peptidoglycan layer.

Its subcellular location is the periplasm. Its function is as follows. Part of the Tol-Pal system, which plays a role in outer membrane invagination during cell division and is important for maintaining outer membrane integrity. This Bordetella avium (strain 197N) protein is Tol-Pal system protein TolB.